Reading from the N-terminus, the 639-residue chain is Chaperone protein DnaK 1 (639 aa).

Thr-199 bears the Phosphothreonine; by autocatalysis mark. Over residues 603–612 (QQQAQAQQAP) the composition is skewed to low complexity. Residues 603 to 639 (QQQAQAQQAPGGEGEQEAKQDDNVVDAEFEEVKDEKK) form a disordered region. Residues 625–639 (NVVDAEFEEVKDEKK) are compositionally biased toward acidic residues.

Belongs to the heat shock protein 70 family.

Acts as a chaperone. The polypeptide is Chaperone protein DnaK 1 (Photobacterium profundum (strain SS9)).